The sequence spans 273 residues: 4-diphosphocytidyl-2-C-methyl-D-erythritol kinase (273 aa).

Residue lysine 12 is part of the active site. Residue 90 to 100 coordinates ATP; it reads PVASGIGGGSA. Aspartate 122 is an active-site residue.

Belongs to the GHMP kinase family. IspE subfamily.

It catalyses the reaction 4-CDP-2-C-methyl-D-erythritol + ATP = 4-CDP-2-C-methyl-D-erythritol 2-phosphate + ADP + H(+). It participates in isoprenoid biosynthesis; isopentenyl diphosphate biosynthesis via DXP pathway; isopentenyl diphosphate from 1-deoxy-D-xylulose 5-phosphate: step 3/6. Functionally, catalyzes the phosphorylation of the position 2 hydroxy group of 4-diphosphocytidyl-2C-methyl-D-erythritol. The polypeptide is 4-diphosphocytidyl-2-C-methyl-D-erythritol kinase (Paracoccus denitrificans (strain Pd 1222)).